Consider the following 160-residue polypeptide: Lipoprotein signal peptidase (160 aa).

The next 2 helical transmembrane spans lie at 60–80 and 84–104; these read TEWLIAASCLGVILALTAFFL and LPFLDTRPGVAALGIILAGTI. Active-site residues include Asp118 and Asp132. A helical membrane pass occupies residues 127-147; that stretch reads TFNMADSCLTLGIIWLVLLYL.

It belongs to the peptidase A8 family.

The protein localises to the cell membrane. It catalyses the reaction Release of signal peptides from bacterial membrane prolipoproteins. Hydrolyzes -Xaa-Yaa-Zaa-|-(S,diacylglyceryl)Cys-, in which Xaa is hydrophobic (preferably Leu), and Yaa (Ala or Ser) and Zaa (Gly or Ala) have small, neutral side chains.. The protein operates within protein modification; lipoprotein biosynthesis (signal peptide cleavage). Functionally, this protein specifically catalyzes the removal of signal peptides from prolipoproteins. In Dehalococcoides mccartyi (strain ATCC BAA-2266 / KCTC 15142 / 195) (Dehalococcoides ethenogenes (strain 195)), this protein is Lipoprotein signal peptidase.